The primary structure comprises 513 residues: Putative BTB/POZ domain-containing protein L55 (513 aa).

The region spanning 11-83 (SPIKIILQDI…FHGYKMEISD (73 aa)) is the BTB domain.

Belongs to the mimivirus BTB/WD family.

The sequence is that of Putative BTB/POZ domain-containing protein L55 from Acanthamoeba polyphaga (Amoeba).